The chain runs to 261 residues: Mlc titration factor A (261 aa).

4 residues coordinate Zn(2+): His-111, His-148, His-152, and Glu-211.

It belongs to the MtfA family. Interacts with Mlc. Zn(2+) is required as a cofactor.

The protein resides in the cytoplasm. Its function is as follows. Involved in the modulation of the activity of the glucose-phosphotransferase system (glucose-PTS). Interacts with the transcriptional repressor Mlc, preventing its interaction with DNA and leading to the modulation of expression of genes regulated by Mlc, including ptsG, which encodes the PTS system glucose-specific EIICB component. Functionally, shows zinc-dependent metallopeptidase activity. This chain is Mlc titration factor A, found in Edwardsiella ictaluri (strain 93-146).